The sequence spans 105 residues: MTMMITTGNSFEGKVIKQYLGIVRGIVVRSPTISQGLMGGLKSIVGGKIGAYSEMCEHAREEAFQLMIEHAQALNANGIIAMRYDTGEIGQAGTEVLCYGTAVII.

Belongs to the UPF0145 family.

In Legionella pneumophila subsp. pneumophila (strain Philadelphia 1 / ATCC 33152 / DSM 7513), this protein is UPF0145 protein lpg0197.